Here is a 56-residue protein sequence, read N- to C-terminus: Trypsin inhibitor 1 (56 aa).

Residues 1 to 25 (MATTMAKLITLVVLAILAFVEVSVS) form the signal peptide. A propeptide spanning residues 26–39 (GYKTSISTITIEDN) is cleaved from the precursor. The segment at residues 40 to 53 (GRCTKSIPPICFPD) is a cross-link (cyclopeptide (Gly-Asp)). An intrachain disulfide couples Cys42 to Cys50. A propeptide spanning residues 54–56 (GRP) is cleaved from the precursor.

Post-translationally, this is a cyclic peptide.

Inhibits trypsin, cathepsin G, elastase, chymotrypsin and thrombin. Does not inhibit factor Xa. This is Trypsin inhibitor 1 from Helianthus annuus (Common sunflower).